Reading from the N-terminus, the 832-residue chain is Serine/threonine-protein kinase Doa (832 aa).

Disordered stretches follow at residues Met-1–Ile-86, Leu-135–Pro-158, Ser-179–Pro-215, and Ser-258–Gln-419. Residues Val-8–Thr-18 are compositionally biased toward polar residues. Residues Arg-20–Leu-32 show a composition bias toward basic and acidic residues. Composition is skewed to low complexity over residues Thr-40–Asn-53, Gln-137–Pro-158, and Met-183–Gln-203. Over residues His-271 to Thr-282 the composition is skewed to polar residues. Low complexity-rich tracts occupy residues Gln-285–His-310, Gln-347–Gln-365, and Ser-396–Gln-419. In terms of domain architecture, Protein kinase spans Tyr-479–Phe-799. Residues Leu-485–Val-493 and Lys-508 contribute to the ATP site. Catalysis depends on Asp-605, which acts as the Proton acceptor. Positions Gly-809 to Arg-832 are disordered. Residues Ser-823–Arg-832 are compositionally biased toward basic and acidic residues.

This sequence belongs to the protein kinase superfamily. CMGC Ser/Thr protein kinase family. Lammer subfamily. As to quaternary structure, interacts (via N-terminus) with x16 (via Arg/Ser-rich region). Interacts with eEF1gamma (via C-terminus); the interaction is probably direct, is transient and leads to phosphorylation of eEF1gamma by Doa. It depends on Mg(2+) as a cofactor. Post-translationally, autophosphorylated on serine, threonine and tyrosine residues. As to expression, ubiquitous expression in embryos. Stage 17 embryos show elevated expression in CNS and brain. Ubiquitous expression in larval imaginal disks. Increased expression posterior to the eye-antennal disk morphogenetic furrow.

It localises to the cytoplasm. Its subcellular location is the cytosol. It is found in the nucleus. The enzyme catalyses L-seryl-[protein] + ATP = O-phospho-L-seryl-[protein] + ADP + H(+). The catalysed reaction is L-threonyl-[protein] + ATP = O-phospho-L-threonyl-[protein] + ADP + H(+). It carries out the reaction L-tyrosyl-[protein] + ATP = O-phospho-L-tyrosyl-[protein] + ADP + H(+). Functionally, dual specificity kinase involved in the negative regulation of microtubule-based transport through phsophorylation of the microtuble-binding protein eEF1gamma. May function in the control of alternative splicing by phosphorylating serine/arginine-rich splicing factors, the SR proteins, including x16. Negative regulator of the copia retrotransposon element of the white (w) gene. In the eye, it is required for normal pigmentation, photoreceptor cell development and for organization of interommatidial bristles. Also essential for embryonic segmentation and differentiation of the nervous system. Its function is as follows. May be the specific isoform involved in regulation of microtubule-based transport through phosphorylation of the microtubule binding protein eEF1gamma. The chain is Serine/threonine-protein kinase Doa from Drosophila melanogaster (Fruit fly).